A 292-amino-acid polypeptide reads, in one-letter code: Xyloglucan endotransglucosylase/hydrolase protein A (292 aa).

The signal sequence occupies residues 1–20; it reads MGSSLWTCLILLSLASASFA. In terms of domain architecture, GH16 spans 21 to 219; the sequence is ANPRTPIDVP…WSKAPFIASY (199 aa). Residue Glu-105 is the Nucleophile of the active site. The active-site Proton donor is the Glu-109. Glu-109 is a binding site for xyloglucan. Asn-113 carries N-linked (GlcNAc...) asparagine glycosylation. Residues 122 to 124, 132 to 134, 198 to 199, and Gly-203 each bind xyloglucan; these read QTN, DRE, and DW. 2 disulfides stabilise this stretch: Cys-227-Cys-236 and Cys-273-Cys-286. Arg-278 is a xyloglucan binding site.

The protein belongs to the glycosyl hydrolase 16 family. XTH group 1 subfamily. Contains at least one intrachain disulfide bond essential for its enzymatic activity. Predominantly expressed in the phloem fibers of growing internodes. Expressed in xylem cells in the basal part of the internode. In the internode, it is expressed closer to the top of the internode compared to XTHB.

It is found in the secreted. Its subcellular location is the cell wall. It localises to the extracellular space. The protein resides in the apoplast. The catalysed reaction is breaks a beta-(1-&gt;4) bond in the backbone of a xyloglucan and transfers the xyloglucanyl segment on to O-4 of the non-reducing terminal glucose residue of an acceptor, which can be a xyloglucan or an oligosaccharide of xyloglucan.. Its function is as follows. Catalyzes xyloglucan endohydrolysis (XEH) and/or endotransglycosylation (XET). Cleaves and religates xyloglucan polymers, an essential constituent of the primary cell wall, and thereby participates in cell wall construction of growing tissues. In Phaseolus angularis (Azuki bean), this protein is Xyloglucan endotransglucosylase/hydrolase protein A (XTHA).